Reading from the N-terminus, the 135-residue chain is MESFVAMKVVCILFLVGVVAANESGPTKADASTADKDTKKNNVQLRFPNYISNHQKLALKLLKICKDSKSSHNSLSSRSSDVINDKYVDFKNCTFLCKHGNDVNVTLNLPEDTPCGPNGQTCAEKNKCVGHIPGC.

An N-terminal signal peptide occupies residues 1–21 (MESFVAMKVVCILFLVGVVAA). A glycan (N-linked (GlcNAc...) asparagine) is linked at N22. The interval 48–67 (PNYISNHQKLALKLLKICKD) is required for Borrelia OspC-binding. N-linked (GlcNAc...) asparagine glycans are attached at residues N92 and N104. The tract at residues 116 to 135 (GPNGQTCAEKNKCVGHIPGC) is CD4-binding.

It belongs to the salp15 family. Monomer. Interacts with host CD4. Interacts with host DC-SIGN (CD209). As to quaternary structure, (Microbial infection) Interacts with Borrelia outer surface protein C (OspC). In terms of processing, glycosylated. As to expression, expressed in salivary glands. Detected in host skin, at the site of natural inoculation.

It localises to the secreted. In terms of biological role, salivary tick protein that downregulates host immune system by binding to both dendritic cells, and CD4(+) T cells. Specifically binds to the CD4 coreceptor on T cells. This interaction prevents the activation of the Src kinase, Lck, and its downstream substrate Zap-70, and results in deficient activation of PLCgamma1, the repression of calcium fluxes triggered by T-cell antigen receptor (TCR) ligation, and a subsequent reduction in interleukin-2 production. This salivary protein also binds to DC-SIGN (CD209) on dendritic cells (DC) and activates the Raf-1 kinase/MEK signaling pathway that results in down-regulating expression of pro-inflammatory cytokines. Furthermore, it inhibits T cell proliferation induced by DCs. It also inhibits in vitro keratinocyte inflammation induced by Borrelia burgdorferi or by the major outer surface protein (OspC) of Borrelia. In addition, it downregulates chemokines and monocyte chemoattractant protein 1, as well as several antimicrobial peptides such as defensins, cathelicidin, psoriasin, and RNase 7. Apart from its immunomodulatory activities, it is also associated with protection of Borrelia spirochetes from antibody-mediated killing through its binding to OspC. In vivo, tests on different immune disease animal models show promising therapeutic results, e.g., in inhibiting HIV infection, experimental autoimmune encephalomyelitis, transplantation rejection, and asthma. (Microbial infection) Protects Borrelia garinii (strains A87S and VSBP) from host complement-mediated killing. Its function is as follows. (Microbial infection) Partially protects Borrelia burgdorferi (strains VS215 and B31) from host complement-mediated killing. This is Salivary protein 15 from Ixodes scapularis (Black-legged tick).